The following is a 152-amino-acid chain: Aspartate carbamoyltransferase regulatory chain (152 aa).

The Zn(2+) site is built by cysteine 109, cysteine 114, cysteine 138, and cysteine 141.

This sequence belongs to the PyrI family. In terms of assembly, contains catalytic and regulatory chains. The cofactor is Zn(2+).

Its function is as follows. Involved in allosteric regulation of aspartate carbamoyltransferase. The chain is Aspartate carbamoyltransferase regulatory chain from Proteus mirabilis (strain HI4320).